The following is an 811-amino-acid chain: Methionine--tRNA ligase (811 aa).

Positions 11–21 (PYVNNVPHLGN) match the 'HIGH' region motif. Positions 142, 145, 155, and 158 each coordinate Zn(2+). A 'KMSKS' region motif is present at residues 344 to 348 (KFSKS). Lys-347 provides a ligand contact to ATP. Residues 606-640 (GVSVPRTAQMPTGMNKKETDAQQKKEEREMPPPSD) form a disordered region. A compositionally biased stretch (basic and acidic residues) spans 620–635 (NKKETDAQQKKEEREM). A tRNA-binding domain is found at 648–753 (FSERVVLKVA…PWALPGERAT (106 aa)).

It belongs to the class-I aminoacyl-tRNA synthetase family. MetG type 1 subfamily. As to quaternary structure, homodimer. Zn(2+) is required as a cofactor.

The protein resides in the cytoplasm. It carries out the reaction tRNA(Met) + L-methionine + ATP = L-methionyl-tRNA(Met) + AMP + diphosphate. Its function is as follows. Is required not only for elongation of protein synthesis but also for the initiation of all mRNA translation through initiator tRNA(fMet) aminoacylation. This is Methionine--tRNA ligase from Treponema pallidum (strain Nichols).